Consider the following 141-residue polypeptide: D-aminoacyl-tRNA deacylase (141 aa).

Residues 133 to 134 (GP) carry the Gly-cisPro motif, important for rejection of L-amino acids motif.

Belongs to the DTD family. Homodimer.

The protein resides in the cytoplasm. It catalyses the reaction glycyl-tRNA(Ala) + H2O = tRNA(Ala) + glycine + H(+). The enzyme catalyses a D-aminoacyl-tRNA + H2O = a tRNA + a D-alpha-amino acid + H(+). An aminoacyl-tRNA editing enzyme that deacylates mischarged D-aminoacyl-tRNAs. Also deacylates mischarged glycyl-tRNA(Ala), protecting cells against glycine mischarging by AlaRS. Acts via tRNA-based rather than protein-based catalysis; rejects L-amino acids rather than detecting D-amino acids in the active site. By recycling D-aminoacyl-tRNA to D-amino acids and free tRNA molecules, this enzyme counteracts the toxicity associated with the formation of D-aminoacyl-tRNA entities in vivo and helps enforce protein L-homochirality. This Thermobifida fusca (strain YX) protein is D-aminoacyl-tRNA deacylase.